The primary structure comprises 123 residues: Histone H1-like protein HC1 (123 aa).

The interval isoleucine 54 to lysine 123 is disordered. Basic residues predominate over residues leucine 61–lysine 75. Residues lysine 85 to proline 102 are compositionally biased toward low complexity. A compositionally biased stretch (basic residues) spans alanine 103–lysine 123.

Belongs to the histone H1/H5 family. HCT subfamily.

Its function is as follows. Might have a role analogous to that of eukaryotic histone proteins. This Chlamydia pneumoniae (Chlamydophila pneumoniae) protein is Histone H1-like protein HC1 (hctA).